The primary structure comprises 294 residues: Early 4 ORF6 protein (294 aa).

Residues 239–255 (ARRTRRLMLRAVRIIAE) carry the Nuclear localization signal motif.

It belongs to the adenoviridae E4 30 to 34 kDa protein family. Interacts with E1B-55k.

Its subcellular location is the host nucleus. It is found in the host cytoplasm. Plays a major role to prevent cellular inhibition of viral genome replication by nuclear bodies. Assembles an SCF-like E3 ubiquitin ligase complex based on the cellular proteins ELOB, ELOC, CUL5 and RBX1, in cooperation with viral E1B-55K. This viral RING-type ligase ubiquitinates cellular substrates prior to proteasomal degradation: p53/TP53, LIG4, MRE11-RAD50-NBS1 (MRN) complex, ITGA3, DAXX and BLM. This is Early 4 ORF6 protein from Homo sapiens (Human).